The chain runs to 293 residues: Bifunctional protein FolD (293 aa).

Residues 165 to 167 (GRG), Thr192, and Val233 each bind NADP(+).

The protein belongs to the tetrahydrofolate dehydrogenase/cyclohydrolase family. As to quaternary structure, homodimer.

The enzyme catalyses (6R)-5,10-methylene-5,6,7,8-tetrahydrofolate + NADP(+) = (6R)-5,10-methenyltetrahydrofolate + NADPH. It carries out the reaction (6R)-5,10-methenyltetrahydrofolate + H2O = (6R)-10-formyltetrahydrofolate + H(+). It functions in the pathway one-carbon metabolism; tetrahydrofolate interconversion. In terms of biological role, catalyzes the oxidation of 5,10-methylenetetrahydrofolate to 5,10-methenyltetrahydrofolate and then the hydrolysis of 5,10-methenyltetrahydrofolate to 10-formyltetrahydrofolate. The chain is Bifunctional protein FolD from Streptomyces griseus subsp. griseus (strain JCM 4626 / CBS 651.72 / NBRC 13350 / KCC S-0626 / ISP 5235).